The following is a 364-amino-acid chain: Fructose-bisphosphate aldolase B (364 aa).

Substrate contacts are provided by arginine 56 and lysine 147. Glutamate 188 (proton acceptor) is an active-site residue. Lysine 230 (schiff-base intermediate with dihydroxyacetone-P) is an active-site residue.

It belongs to the class I fructose-bisphosphate aldolase family. Homotetramer.

It localises to the cytoplasm. Its subcellular location is the cytoskeleton. It is found in the microtubule organizing center. The protein resides in the centrosome. The protein localises to the centriolar satellite. It catalyses the reaction beta-D-fructose 1,6-bisphosphate = D-glyceraldehyde 3-phosphate + dihydroxyacetone phosphate. Its pathway is carbohydrate degradation; glycolysis; D-glyceraldehyde 3-phosphate and glycerone phosphate from D-glucose: step 4/4. The protein is Fructose-bisphosphate aldolase B (ALDOB) of Gallus gallus (Chicken).